We begin with the raw amino-acid sequence, 829 residues long: Isethionate sulfite-lyase (829 aa).

The PFL domain occupies 31–699; sequence ERVFNILDSF…VVSATPNGRL (669 aa). 2-hydroxyethane-1-sulfonate contacts are provided by residues Arg-188, Gln-192, 467-469, and Arg-677; that span reads CTE. Cys-467 (cysteine radical intermediate) is an active-site residue. Catalysis depends on Glu-469, which acts as the Proton acceptor. Residues 706-829 form the Glycine radical domain; sequence DGSSASHGAD…LIARTQHDAM (124 aa). Gly-804 carries the post-translational modification Glycine radical.

Belongs to the glycyl radical enzyme (GRE) family. Homodimer. Requires the activating protein IslB to generate the key active site glycyl radical on Gly-804 that is involved in catalysis.

It carries out the reaction 2-hydroxyethane-1-sulfonate = acetaldehyde + sulfite + H(+). Its pathway is organosulfur degradation; alkanesulfonate degradation. In terms of biological role, involved in an anaerobic respiration pathway that converts the sulfonate isethionate (2-hydroxyethanesulfonate) to ammonia, acetate and sulfide. Catalyzes the radical-mediated C-S bond cleavage of isethionate (2-hydroxyethanesulfonate) to form sulfite and acetaldehyde. This is Isethionate sulfite-lyase from Oleidesulfovibrio alaskensis (strain ATCC BAA-1058 / DSM 17464 / G20) (Desulfovibrio alaskensis).